The sequence spans 575 residues: Glycosyltransferase family 92 protein At1g27200 (575 aa).

The helical transmembrane segment at 22–44 (FLSQRYLILCFCCFFVLLFFLSS) threads the bilayer. The GT92 domain maps to 293–540 (LCVCTMLWNQ…TEAIEPPDWK (248 aa)).

It belongs to the glycosyltransferase 92 family.

Its subcellular location is the membrane. The sequence is that of Glycosyltransferase family 92 protein At1g27200 from Arabidopsis thaliana (Mouse-ear cress).